Consider the following 286-residue polypeptide: Release factor glutamine methyltransferase (286 aa).

S-adenosyl-L-methionine contacts are provided by residues 120 to 124 (GTGSG), Asp-143, Trp-172, and Asn-187. Residue 187–190 (NPPY) participates in substrate binding.

This sequence belongs to the protein N5-glutamine methyltransferase family. PrmC subfamily.

The enzyme catalyses L-glutaminyl-[peptide chain release factor] + S-adenosyl-L-methionine = N(5)-methyl-L-glutaminyl-[peptide chain release factor] + S-adenosyl-L-homocysteine + H(+). In terms of biological role, methylates the class 1 translation termination release factors RF1/PrfA and RF2/PrfB on the glutamine residue of the universally conserved GGQ motif. The sequence is that of Release factor glutamine methyltransferase from Gloeobacter violaceus (strain ATCC 29082 / PCC 7421).